Reading from the N-terminus, the 270-residue chain is 4-hydroxy-tetrahydrodipicolinate reductase (270 aa).

NAD(+) contacts are provided by residues 9–14 and glutamate 35; that span reads GAGGRM. An NADP(+)-binding site is contributed by arginine 36. NAD(+) contacts are provided by residues 99–101 and 123–126; these read GTT and ASNF. The active-site Proton donor/acceptor is the histidine 156. Residue histidine 157 participates in (S)-2,3,4,5-tetrahydrodipicolinate binding. Catalysis depends on lysine 160, which acts as the Proton donor. 166-167 is a binding site for (S)-2,3,4,5-tetrahydrodipicolinate; it reads GT.

The protein belongs to the DapB family.

It is found in the cytoplasm. It catalyses the reaction (S)-2,3,4,5-tetrahydrodipicolinate + NAD(+) + H2O = (2S,4S)-4-hydroxy-2,3,4,5-tetrahydrodipicolinate + NADH + H(+). It carries out the reaction (S)-2,3,4,5-tetrahydrodipicolinate + NADP(+) + H2O = (2S,4S)-4-hydroxy-2,3,4,5-tetrahydrodipicolinate + NADPH + H(+). The protein operates within amino-acid biosynthesis; L-lysine biosynthesis via DAP pathway; (S)-tetrahydrodipicolinate from L-aspartate: step 4/4. Functionally, catalyzes the conversion of 4-hydroxy-tetrahydrodipicolinate (HTPA) to tetrahydrodipicolinate. In Pasteurella multocida (strain Pm70), this protein is 4-hydroxy-tetrahydrodipicolinate reductase.